The chain runs to 427 residues: 3-isopropylmalate dehydratase large subunit (427 aa).

Residues Cys-308, Cys-368, and Cys-371 each coordinate [4Fe-4S] cluster.

It belongs to the aconitase/IPM isomerase family. LeuC type 2 subfamily. Heterodimer of LeuC and LeuD. It depends on [4Fe-4S] cluster as a cofactor.

The catalysed reaction is (2R,3S)-3-isopropylmalate = (2S)-2-isopropylmalate. Its pathway is amino-acid biosynthesis; L-leucine biosynthesis; L-leucine from 3-methyl-2-oxobutanoate: step 2/4. In terms of biological role, catalyzes the isomerization between 2-isopropylmalate and 3-isopropylmalate, via the formation of 2-isopropylmaleate. The chain is 3-isopropylmalate dehydratase large subunit from Geobacter metallireducens (strain ATCC 53774 / DSM 7210 / GS-15).